We begin with the raw amino-acid sequence, 270 residues long: Formamidopyrimidine-DNA glycosylase (270 aa).

Catalysis depends on Pro-2, which acts as the Schiff-base intermediate with DNA. Glu-3 (proton donor) is an active-site residue. The active-site Proton donor; for beta-elimination activity is Lys-58. Residues His-91, Arg-110, and Lys-151 each coordinate DNA. Residues 236-270 (FAYGRGGQPCKVCGTTLREIKLGQRASVYCPKCQR) form an FPG-type zinc finger. The active-site Proton donor; for delta-elimination activity is Arg-260.

It belongs to the FPG family. Monomer. It depends on Zn(2+) as a cofactor.

The enzyme catalyses Hydrolysis of DNA containing ring-opened 7-methylguanine residues, releasing 2,6-diamino-4-hydroxy-5-(N-methyl)formamidopyrimidine.. The catalysed reaction is 2'-deoxyribonucleotide-(2'-deoxyribose 5'-phosphate)-2'-deoxyribonucleotide-DNA = a 3'-end 2'-deoxyribonucleotide-(2,3-dehydro-2,3-deoxyribose 5'-phosphate)-DNA + a 5'-end 5'-phospho-2'-deoxyribonucleoside-DNA + H(+). In terms of biological role, involved in base excision repair of DNA damaged by oxidation or by mutagenic agents. Acts as a DNA glycosylase that recognizes and removes damaged bases. Has a preference for oxidized purines, such as 7,8-dihydro-8-oxoguanine (8-oxoG). Has AP (apurinic/apyrimidinic) lyase activity and introduces nicks in the DNA strand. Cleaves the DNA backbone by beta-delta elimination to generate a single-strand break at the site of the removed base with both 3'- and 5'-phosphates. This chain is Formamidopyrimidine-DNA glycosylase, found in Pseudomonas syringae pv. tomato (strain ATCC BAA-871 / DC3000).